A 106-amino-acid polypeptide reads, in one-letter code: uncharacterized protein (106 aa).

This is an uncharacterized protein from Sinorhizobium fredii (strain NBRC 101917 / NGR234).